Reading from the N-terminus, the 301-residue chain is Phosphate transport system permease protein PstA 2 (301 aa).

A run of 6 helical transmembrane segments spans residues 36–56, 83–103, 127–147, 149–169, 209–229, and 274–294; these read ACVC…IGVV, IIGT…VSVL, LSGI…VVYF, WGFS…PYIA, GIVT…APLL, and ALLL…INWL. One can recognise an ABC transmembrane type-1 domain in the interval 83–288; that stretch reads IIGTAVLAIG…VFLLLLIFIG (206 aa).

The protein belongs to the binding-protein-dependent transport system permease family. CysTW subfamily.

It is found in the cell membrane. Functionally, part of the binding-protein-dependent transport system for phosphate; probably responsible for the translocation of the substrate across the membrane. The polypeptide is Phosphate transport system permease protein PstA 2 (pstA2) (Mycobacterium bovis (strain ATCC BAA-935 / AF2122/97)).